The sequence spans 500 residues: NAD(P)H-quinone oxidoreductase chain 4, chloroplastic (500 aa).

The next 14 membrane-spanning stretches (helical) occupy residues 4–24, 35–55, 87–107, 113–130, 134–154, 167–187, 207–227, 242–262, 272–292, 305–325, 330–350, 386–406, 416–436, and 462–482; these read FPWL…IFFL, YTIC…CYHF, IGPV…AWPV, LFHF…GSFS, LLLF…LLSM, FILY…GVGL, VALE…KLPI, HYST…YGLI, AHSI…IYAA, IAYS…SITD, GAIL…FLAG, LALP…GIIT, IVIT…LLSM, and LFVS…PDFV.

Belongs to the complex I subunit 4 family.

It localises to the plastid. The protein localises to the chloroplast thylakoid membrane. It carries out the reaction a plastoquinone + NADH + (n+1) H(+)(in) = a plastoquinol + NAD(+) + n H(+)(out). It catalyses the reaction a plastoquinone + NADPH + (n+1) H(+)(in) = a plastoquinol + NADP(+) + n H(+)(out). The sequence is that of NAD(P)H-quinone oxidoreductase chain 4, chloroplastic from Guizotia abyssinica (Niger).